Reading from the N-terminus, the 330-residue chain is Ribosomal RNA small subunit methyltransferase H (330 aa).

S-adenosyl-L-methionine-binding positions include 35-37, D53, F80, D101, and Q108; that span reads GGY.

The protein belongs to the methyltransferase superfamily. RsmH family.

The protein resides in the cytoplasm. It carries out the reaction cytidine(1402) in 16S rRNA + S-adenosyl-L-methionine = N(4)-methylcytidine(1402) in 16S rRNA + S-adenosyl-L-homocysteine + H(+). Functionally, specifically methylates the N4 position of cytidine in position 1402 (C1402) of 16S rRNA. This Rhodopseudomonas palustris (strain BisB18) protein is Ribosomal RNA small subunit methyltransferase H.